Consider the following 58-residue polypeptide: U-scoloptoxin(14)-Sa1a (58 aa).

The N-terminal stretch at 1-18 is a signal peptide; sequence MNRILGMIFLFCLISCYA.

This sequence belongs to the scoloptoxin-14 family. Contains 4 disulfide bonds. In terms of tissue distribution, expressed by the venom gland.

Its subcellular location is the secreted. The protein is U-scoloptoxin(14)-Sa1a of Scolopendra alternans (Florida Keys giant centipede).